Reading from the N-terminus, the 198-residue chain is Ribonuclease HII (198 aa).

The RNase H type-2 domain occupies 10 to 198; the sequence is QLVAGVDEVG…PVKRALGLAS (189 aa). Residues Asp-16, Glu-17, and Asp-108 each coordinate a divalent metal cation.

The protein belongs to the RNase HII family. Mn(2+) serves as cofactor. It depends on Mg(2+) as a cofactor.

The protein resides in the cytoplasm. It carries out the reaction Endonucleolytic cleavage to 5'-phosphomonoester.. Its function is as follows. Endonuclease that specifically degrades the RNA of RNA-DNA hybrids. The sequence is that of Ribonuclease HII from Shigella dysenteriae serotype 1 (strain Sd197).